A 558-amino-acid chain; its full sequence is Cytochrome P450 monooxygenase grgG (558 aa).

Residues 11–31 traverse the membrane as a helical segment; it reads PASFIYFPLLILVGHALIFIL. Residue cysteine 470 coordinates heme.

This sequence belongs to the cytochrome P450 family. Heme is required as a cofactor.

Its subcellular location is the membrane. It participates in secondary metabolite biosynthesis. Functionally, cytochrome P450 monooxygenase; part of the gene cluster that mediates the biosynthesis of gregatin A, a fungal polyketide featuring an alkylated furanone core. The PKS grgA synthesizes C11 and C4 polyketide chains in the presence and absence of the trans-enoyl reductase grgB, respectively. The polyketide transferase grgF is then responsible for the fusion of the two carbon chains to produce the furanone skeleton of gregatin A. Next, the cytochrome P450 monooxygenase grgG performs the oxidative cyclization to furnish the gregatin scaffold and leads to the formation of desmethylgregatin A. In this transformation, grgG initially abstracts a hydrogen atom from C-8 to generate a substrate radical, from which one electron is transferred to the iron-heme center to yield a carbocationic species. Heterocyclization along with double-bond isomerizations provides desmethylgregatin A with the furanone ring. Alternatively, grgG might provide hydroxylation at the C-8 radical, which is followed by dehydration to give the cyclized desmethylgregatin A. Finally, the O-methyltransferase grgD methylates the carboxyl group of desmethylgregatin A to provide gregatin A. The polypeptide is Cytochrome P450 monooxygenase grgG (grgG) (Penicillium sp).